The following is a 243-amino-acid chain: 6-carboxyhexanoate--CoA ligase (243 aa).

Belongs to the BioW family. Homodimer. The cofactor is Mg(2+).

The catalysed reaction is heptanedioate + ATP + CoA = 6-carboxyhexanoyl-CoA + AMP + diphosphate. Its pathway is metabolic intermediate metabolism; pimeloyl-CoA biosynthesis; pimeloyl-CoA from pimelate: step 1/1. In terms of biological role, catalyzes the transformation of pimelate into pimeloyl-CoA with concomitant hydrolysis of ATP to AMP. The polypeptide is 6-carboxyhexanoate--CoA ligase (Corynebacterium pseudotuberculosis (strain FRC41)).